We begin with the raw amino-acid sequence, 470 residues long: ATP synthase subunit beta (470 aa).

157–164 (GGAGVGKT) contributes to the ATP binding site.

It belongs to the ATPase alpha/beta chains family. F-type ATPases have 2 components, CF(1) - the catalytic core - and CF(0) - the membrane proton channel. CF(1) has five subunits: alpha(3), beta(3), gamma(1), delta(1), epsilon(1). CF(0) has three main subunits: a(1), b(2) and c(9-12). The alpha and beta chains form an alternating ring which encloses part of the gamma chain. CF(1) is attached to CF(0) by a central stalk formed by the gamma and epsilon chains, while a peripheral stalk is formed by the delta and b chains.

The protein resides in the cell inner membrane. The catalysed reaction is ATP + H2O + 4 H(+)(in) = ADP + phosphate + 5 H(+)(out). Produces ATP from ADP in the presence of a proton gradient across the membrane. The catalytic sites are hosted primarily by the beta subunits. In Geotalea uraniireducens (strain Rf4) (Geobacter uraniireducens), this protein is ATP synthase subunit beta.